Here is a 178-residue protein sequence, read N- to C-terminus: ATP synthase subunit delta (178 aa).

It belongs to the ATPase delta chain family. F-type ATPases have 2 components, F(1) - the catalytic core - and F(0) - the membrane proton channel. F(1) has five subunits: alpha(3), beta(3), gamma(1), delta(1), epsilon(1). F(0) has three main subunits: a(1), b(2) and c(10-14). The alpha and beta chains form an alternating ring which encloses part of the gamma chain. F(1) is attached to F(0) by a central stalk formed by the gamma and epsilon chains, while a peripheral stalk is formed by the delta and b chains.

It is found in the cell membrane. Functionally, f(1)F(0) ATP synthase produces ATP from ADP in the presence of a proton or sodium gradient. F-type ATPases consist of two structural domains, F(1) containing the extramembraneous catalytic core and F(0) containing the membrane proton channel, linked together by a central stalk and a peripheral stalk. During catalysis, ATP synthesis in the catalytic domain of F(1) is coupled via a rotary mechanism of the central stalk subunits to proton translocation. In terms of biological role, this protein is part of the stalk that links CF(0) to CF(1). It either transmits conformational changes from CF(0) to CF(1) or is implicated in proton conduction. This chain is ATP synthase subunit delta, found in Lysinibacillus sphaericus (strain C3-41).